The chain runs to 303 residues: MGRLRFVVLLSIFPIKTFSEPCYTMALVLRDSIKISEFINLSAFEKLLPSALTAVKSVRIPKVDKIISYENDTLSDIDLLKGVKLVENGYVCLAGLVVTGEWNLPDNCKGGVSICLVDKRMKRANEATLGSYHTSACKKRFTFKIIPNYSVTTADALKGIWQVMTNIRGVEMEKGFCPLSLEFVSICVVYLNNIKLGLREKILNVTEGGPTELTEAVVDRFVEKVPMAARLKSFRSVNKKKPSNSSKFVNGKSRLNSRNKLNYENGDSDVGTSVVDDIVVGNGVSDIRIDDDCESFDAQSESY.

It belongs to the tobamovirus movement protein family.

It is found in the host cytoplasm. Its subcellular location is the host cytoskeleton. The protein localises to the host cell junction. The protein resides in the host plasmodesma. Functionally, transports viral genome to neighboring plant cells directly through plasmosdesmata, without any budding. The movement protein allows efficient cell to cell propagation, by bypassing the host cell wall barrier. Forms a ribonucleoprotein complex with viral RNA. Binds microtubules and modulates microtubule stability. Can bind double-stranded DNA. This is Movement protein (MP) from Odontoglossum ringspot virus (isolate Korean Cy) (ORSV-Cy).